We begin with the raw amino-acid sequence, 122 residues long: Small ribosomal subunit protein uS13c (122 aa).

The interval 102 to 122 (RTRTNARTRRGAKKTVAGKKK) is disordered.

This sequence belongs to the universal ribosomal protein uS13 family. Part of the 30S ribosomal subunit.

It is found in the plastid. Its subcellular location is the chloroplast. In terms of biological role, located at the top of the head of the 30S subunit, it contacts several helices of the 16S rRNA. The polypeptide is Small ribosomal subunit protein uS13c (Guillardia theta (Cryptophyte)).